The sequence spans 436 residues: Protein translocase subunit SecY (436 aa).

The next 10 membrane-spanning stretches (helical) occupy residues 18 to 38 (IAFT…PATG), 69 to 89 (LLQV…SIIV), 116 to 138 (YTRY…LART), 154 to 174 (ILTV…VMWF), 187 to 207 (MSLL…GQVV), 214 to 234 (VFAI…FVEE), 266 to 286 (MANV…GILI), 314 to 334 (PVYM…YVSI), 375 to 395 (VVGA…FAVI), and 396 to 416 (GTSQ…GVGL).

Belongs to the SecY/SEC61-alpha family. In terms of assembly, component of the Sec protein translocase complex. Heterotrimer consisting of SecY, SecE and SecG subunits. The heterotrimers can form oligomers, although 1 heterotrimer is thought to be able to translocate proteins. Interacts with the ribosome. Interacts with SecDF, and other proteins may be involved. Interacts with SecA.

The protein resides in the cell membrane. Functionally, the central subunit of the protein translocation channel SecYEG. Consists of two halves formed by TMs 1-5 and 6-10. These two domains form a lateral gate at the front which open onto the bilayer between TMs 2 and 7, and are clamped together by SecE at the back. The channel is closed by both a pore ring composed of hydrophobic SecY resides and a short helix (helix 2A) on the extracellular side of the membrane which forms a plug. The plug probably moves laterally to allow the channel to open. The ring and the pore may move independently. In Micrococcus luteus (Micrococcus lysodeikticus), this protein is Protein translocase subunit SecY.